We begin with the raw amino-acid sequence, 136 residues long: Large ribosomal subunit protein uL3 (136 aa).

N5-methylglutamine is present on glutamine 83.

Belongs to the universal ribosomal protein uL3 family. Part of the 50S ribosomal subunit. Forms a cluster with proteins L14 and L19. In terms of processing, methylated by PrmB.

One of the primary rRNA binding proteins, it binds directly near the 3'-end of the 23S rRNA, where it nucleates assembly of the 50S subunit. This is Large ribosomal subunit protein uL3 (rplC) from Carsonella ruddii.